A 294-amino-acid polypeptide reads, in one-letter code: Acetylglutamate kinase (294 aa).

Residues 64 to 65 (GG), R86, and N189 contribute to the substrate site.

Belongs to the acetylglutamate kinase family. ArgB subfamily.

The protein localises to the cytoplasm. It catalyses the reaction N-acetyl-L-glutamate + ATP = N-acetyl-L-glutamyl 5-phosphate + ADP. It participates in amino-acid biosynthesis; L-arginine biosynthesis; N(2)-acetyl-L-ornithine from L-glutamate: step 2/4. Its function is as follows. Catalyzes the ATP-dependent phosphorylation of N-acetyl-L-glutamate. This chain is Acetylglutamate kinase, found in Carboxydothermus hydrogenoformans (strain ATCC BAA-161 / DSM 6008 / Z-2901).